We begin with the raw amino-acid sequence, 182 residues long: CDP-diacylglycerol--glycerol-3-phosphate 3-phosphatidyltransferase (182 aa).

Topologically, residues 2-12 are cytoplasmic; that stretch reads QFNIPTLLTLF. Residues 13–37 traverse the membrane as a helical segment; the sequence is RVILIPFFVLVFYLPVTWSPFAAAL. Topologically, residues 38–60 are periplasmic; the sequence is IFCVAAVTDWFDGFLARRWNQST. A helical transmembrane segment spans residues 61–81; that stretch reads RFGAFLDPVADKVLVAIAMVL. Topologically, residues 82 to 86 are cytoplasmic; the sequence is VTEHY. A helical transmembrane segment spans residues 87–107; sequence HSWWVTLPAATMIAREIIISA. Residues 108–145 are Periplasmic-facing; it reads LREWMAELGKRSSVAVSWIGKVKTTAQMVALAWLLWRP. The chain crosses the membrane as a helical span at residues 146 to 168; that stretch reads NIWVEYAGIALFFVAAVLTLWSM. Over 169–181 the chain is Cytoplasmic; that stretch reads LQYLSAARADLLD.

Belongs to the CDP-alcohol phosphatidyltransferase class-I family.

The protein resides in the cell inner membrane. The enzyme catalyses a CDP-1,2-diacyl-sn-glycerol + sn-glycerol 3-phosphate = a 1,2-diacyl-sn-glycero-3-phospho-(1'-sn-glycero-3'-phosphate) + CMP + H(+). Its pathway is phospholipid metabolism; phosphatidylglycerol biosynthesis; phosphatidylglycerol from CDP-diacylglycerol: step 1/2. Its function is as follows. Catalyzes the conversion of cytidine diphosphate diacylglycerol (CDP-DG) and glycerol 3-phosphate into phosphatidylglycerol. Essential for the synthesis of anionic phospholipids, thereby playing a role in balancing the ratio of zwitterionic and anionic phospholipids, which is thought to be important for normal membrane function. This is CDP-diacylglycerol--glycerol-3-phosphate 3-phosphatidyltransferase from Shigella sonnei (strain Ss046).